The sequence spans 115 residues: DNA-directed RNA polymerase subunit omega (115 aa).

The protein belongs to the RNA polymerase subunit omega family. In terms of assembly, the RNAP catalytic core consists of 2 alpha, 1 beta, 1 beta' and 1 omega subunit. When a sigma factor is associated with the core the holoenzyme is formed, which can initiate transcription.

The catalysed reaction is RNA(n) + a ribonucleoside 5'-triphosphate = RNA(n+1) + diphosphate. Promotes RNA polymerase assembly. Latches the N- and C-terminal regions of the beta' subunit thereby facilitating its interaction with the beta and alpha subunits. The protein is DNA-directed RNA polymerase subunit omega of Cutibacterium acnes (strain DSM 16379 / KPA171202) (Propionibacterium acnes).